The primary structure comprises 231 residues: NADH-ubiquinone oxidoreductase chain 4 (231 aa).

Transmembrane regions (helical) follow at residues 1 to 21, 34 to 54, 63 to 85, 89 to 111, 128 to 148, and 156 to 176; these read PIAGSMVLAAILLKLGGYGII, MFLPFIVLALWGAILANLTCL, IAYSSVSHMGLVVAAIMIQTPWG, AMTLMIAHGFTSSALFCLANTTY, ILPMATTWWLLTNLMNIAIPP, and LLIMSALFSWCPTTIILLGLS.

Belongs to the complex I subunit 4 family.

Its subcellular location is the mitochondrion membrane. The enzyme catalyses a ubiquinone + NADH + 5 H(+)(in) = a ubiquinol + NAD(+) + 4 H(+)(out). In terms of biological role, core subunit of the mitochondrial membrane respiratory chain NADH dehydrogenase (Complex I) that is believed to belong to the minimal assembly required for catalysis. Complex I functions in the transfer of electrons from NADH to the respiratory chain. The immediate electron acceptor for the enzyme is believed to be ubiquinone. The sequence is that of NADH-ubiquinone oxidoreductase chain 4 (MT-ND4) from Gloydius intermedius (Central Asian pit viper).